Here is a 403-residue protein sequence, read N- to C-terminus: Tripartite motif-containing protein 59 (403 aa).

The segment at 10–60 adopts an RING-type zinc-finger fold; that stretch reads CPICYSIFEDPRVLPCSHTFCRNCLENVLQASGNFYIWRPLRIPLKCPNCR. Residues 92 to 134 form a B box-type zinc finger; that stretch reads PDVVTCPEHYRQPLNVYCLLDKKLVCGHCLTIGQHHGHPIDDL. Zn(2+)-binding residues include Cys-97, His-100, Cys-120, and His-126. Residues 163-246 adopt a coiled-coil conformation; that stretch reads LIEKLEEQKC…TITTSLQDES (84 aa). The helical transmembrane segment at 329–349 threads the bilayer; sequence ILNIAIVSLISVILMLILLFN.

It belongs to the TRIM/RBCC family. As to quaternary structure, interacts with ECSIT. Moderately expressed in the spleen, brain and heart and very highly expressed in the testis.

The protein localises to the endoplasmic reticulum membrane. It carries out the reaction S-ubiquitinyl-[E2 ubiquitin-conjugating enzyme]-L-cysteine + [acceptor protein]-L-lysine = [E2 ubiquitin-conjugating enzyme]-L-cysteine + N(6)-ubiquitinyl-[acceptor protein]-L-lysine.. Its pathway is protein modification; protein ubiquitination. In terms of biological role, E3 ubiquitin ligase involved in different processes such as development and immune response. Serves as a negative regulator for innate immune signaling pathways by suppressing RLR-induced activation of IRF3/7 and NF-kappa-B via interaction with adapter ECSIT. Regulates autophagy through modulating both the transcription and the ubiquitination of BECN1. On the one hand, regulates the transcription of BECN1 through negatively modulating the NF-kappa-B pathway. On the other hand, regulates TRAF6-mediated 'Lys-63'-linked ubiquitination of BECN1, thus affecting the formation of the BECN1-PIK3C3 complex. In addition, mediates 'Lys-48'-linked ubiquitination of TRAF6 and thereby promotes TRAF6 proteasomal degradation. Also acts as a critical regulator for early embryo development from blastocyst stage to gastrula through modulating F-actin assembly and WASH1 'Lys-63'-linked ubiquitination. The polypeptide is Tripartite motif-containing protein 59 (Trim59) (Mus musculus (Mouse)).